Consider the following 192-residue polypeptide: Ciliary microtubule-associated protein 3 (192 aa).

In terms of assembly, interacts with proteins involved in ciliary transport, including ARL13B, CETN1, KIF3A, RAB6A, RAB8A, TUBB1 and TUBG1. Interacts with AURKA.

The protein localises to the cytoplasmic vesicle. It is found in the golgi apparatus. The protein resides in the trans-Golgi network. Its subcellular location is the cytoplasm. In terms of biological role, during primary cilia disassembly, involved in cilia disassembly. Required specifically to control cilia retraction as well as the liberation and duplication of the basal body/centrosome. May act by stimulating AURKA activity at the basal body in a cell cycle-dependent manner. This Bos taurus (Bovine) protein is Ciliary microtubule-associated protein 3 (CIMAP3).